Here is a 570-residue protein sequence, read N- to C-terminus: Capsid vertex component 2 (570 aa).

Positions 1 to 54 (MALSGHVLIDPARLPRDTGPELMWAPSLRNSLRVSPEALELAEREAERARSERW) are interaction with major capsid protein/MCP. The disordered stretch occupies residues 102–123 (QVRSPSTGGRSAPAPPSPSPAQ).

The protein belongs to the herpesviridae CVC2 protein family. Heterodimerizes with CVC1. Interacts with major capsid protein/MCP and triplex capsid protein 1/TRX1 at the pentamer vertices. Interacts with the large tegument protein/LTP.

It is found in the virion. It localises to the host nucleus. Its function is as follows. Capsid vertex-specific component that plays a role during viral DNA encapsidation, assuring correct genome cleavage and presumably stabilizing capsids that contain full-length viral genomes. Participates in the interaction between the capsid and the tegument through interaction with the large tegument protein/LTP. In Homo sapiens (Human), this protein is Capsid vertex component 2.